Here is a 311-residue protein sequence, read N- to C-terminus: Mycothiol acetyltransferase (311 aa).

A 1D-myo-inositol 2-(L-cysteinylamino)-2-deoxy-alpha-D-glucopyranoside-binding site is contributed by E35. Residue 79–81 participates in acetyl-CoA binding; it reads LVV. An N-acetyltransferase domain is found at 155 to 311; it reads VRTYVGTVDD…TAYALARIDD (157 aa). 3 residues coordinate 1D-myo-inositol 2-(L-cysteinylamino)-2-deoxy-alpha-D-glucopyranoside: E180, K225, and E235. Acetyl-CoA contacts are provided by residues 239–241 and 246–252; these read LGV and QGRGLGQ. 1D-myo-inositol 2-(L-cysteinylamino)-2-deoxy-alpha-D-glucopyranoside is bound at residue Y278. 283–288 provides a ligand contact to acetyl-CoA; sequence NVAAAR.

It belongs to the acetyltransferase family. MshD subfamily. As to quaternary structure, monomer.

The enzyme catalyses 1D-myo-inositol 2-(L-cysteinylamino)-2-deoxy-alpha-D-glucopyranoside + acetyl-CoA = mycothiol + CoA + H(+). In terms of biological role, catalyzes the transfer of acetyl from acetyl-CoA to desacetylmycothiol (Cys-GlcN-Ins) to form mycothiol. This chain is Mycothiol acetyltransferase, found in Mycobacterium leprae (strain Br4923).